A 283-amino-acid polypeptide reads, in one-letter code: 1-deoxypentalenic acid 11-beta-hydroxylase (283 aa).

Arg-117 contributes to the substrate binding site. Residues His-135 and Asp-137 each contribute to the Fe cation site. 2-oxoglutarate is bound by residues 135–137 (HQD) and Trp-151. Residue Arg-186 coordinates substrate. His-224 contributes to the Fe cation binding site. 2-oxoglutarate-binding residues include Ser-226 and Arg-238. The disordered stretch occupies residues 260 to 283 (WPESAKDASKGILSKITGTPTTAE).

It belongs to the PhyH family. Requires Fe cation as cofactor. L-ascorbate is required as a cofactor.

The catalysed reaction is 1-deoxypentalenate + 2-oxoglutarate + O2 = 1-deoxy-11beta-hydroxypentalenate + succinate + CO2. It participates in antibiotic biosynthesis; pentalenolactone biosynthesis. Functionally, catalyzes the conversion of 1-deoxypentalenic acid to 11-beta-hydroxy-1-deoxypentalenic acid in the biosynthesis of pentalenolactone antibiotic. This is 1-deoxypentalenic acid 11-beta-hydroxylase (penH) from Streptomyces exfoliatus (Streptomyces hydrogenans).